We begin with the raw amino-acid sequence, 272 residues long: SKA complex subunit 1 homolog (272 aa).

Residues 48–75 (ALSSMELQVQSIKDRLREETEAIPKAKK) are a coiled coil.

This sequence belongs to the SKA1 family.

This chain is SKA complex subunit 1 homolog, found in Arabidopsis thaliana (Mouse-ear cress).